An 89-amino-acid chain; its full sequence is Phytosulfokines 1 (89 aa).

The first 22 residues, 1–22, serve as a signal peptide directing secretion; sequence MVNPGRTARALCLLCLALLLLG. Positions 23 to 79 are excised as a propeptide; sequence QDTHSRKLLLQEKHSHGVGNGTTTTQEPSRENGGSTGSNNNGQLQFDSAKWEEFHTD. The segment at 33–68 is disordered; the sequence is QEKHSHGVGNGTTTTQEPSRENGGSTGSNNNGQLQF. Residue Asn-42 is glycosylated (N-linked (GlcNAc...) asparagine). Tyr-80 and Tyr-82 each carry sulfotyrosine. The propeptide occupies 85–89; the sequence is DVKNP.

It belongs to the phytosulfokine family. Post-translationally, sulfation is important for activity and for the binding to a putative membrane receptor. In terms of processing, PSK-alpha is produced by endopeptidase digestion. PSK-beta is produced from PSK-alpha by exopeptidase digestion. In terms of tissue distribution, expressed throughout the seedling. More abundant in fragments containing shoot or root apexes where cells proliferate vigorously.

It is found in the secreted. Functionally, promotes plant cell differentiation, organogenesis and somatic embryogenesis as well as cell proliferation. The protein is Phytosulfokines 1 (PSK1) of Oryza sativa subsp. indica (Rice).